We begin with the raw amino-acid sequence, 62 residues long: Photosystem II reaction center protein Z (62 aa).

2 helical membrane-spanning segments follow: residues 8–28 and 41–61; these read TLFA…VVFA and FSGV…NSFV.

Belongs to the PsbZ family. PSII is composed of 1 copy each of membrane proteins PsbA, PsbB, PsbC, PsbD, PsbE, PsbF, PsbH, PsbI, PsbJ, PsbK, PsbL, PsbM, PsbT, PsbY, PsbZ, Psb30/Ycf12, at least 3 peripheral proteins of the oxygen-evolving complex and a large number of cofactors. It forms dimeric complexes.

It is found in the plastid. Its subcellular location is the chloroplast thylakoid membrane. Functionally, may control the interaction of photosystem II (PSII) cores with the light-harvesting antenna, regulates electron flow through the 2 photosystem reaction centers. PSII is a light-driven water plastoquinone oxidoreductase, using light energy to abstract electrons from H(2)O, generating a proton gradient subsequently used for ATP formation. The polypeptide is Photosystem II reaction center protein Z (Oltmannsiellopsis viridis (Marine flagellate)).